A 519-amino-acid chain; its full sequence is ATP synthase subunit alpha (519 aa).

Gly175 to Thr182 provides a ligand contact to ATP.

This sequence belongs to the ATPase alpha/beta chains family. In terms of assembly, F-type ATPases have 2 components, CF(1) - the catalytic core - and CF(0) - the membrane proton channel. CF(1) has five subunits: alpha(3), beta(3), gamma(1), delta(1), epsilon(1). CF(0) has three main subunits: a(1), b(2) and c(9-12). The alpha and beta chains form an alternating ring which encloses part of the gamma chain. CF(1) is attached to CF(0) by a central stalk formed by the gamma and epsilon chains, while a peripheral stalk is formed by the delta and b chains.

It is found in the cell inner membrane. It catalyses the reaction ATP + H2O + 4 H(+)(in) = ADP + phosphate + 5 H(+)(out). In terms of biological role, produces ATP from ADP in the presence of a proton gradient across the membrane. The alpha chain is a regulatory subunit. In Acinetobacter baylyi (strain ATCC 33305 / BD413 / ADP1), this protein is ATP synthase subunit alpha.